The following is a 228-amino-acid chain: MKQKYLFIASMALAGCGSMSESNKYWIQYKDIDQSVKEVSFWSREQFHSPSDVKGTVYQRDNLTHLATSTPLGEIYHIYDVNHIPMNVIFLDTKTQRSLNPQNAQDMAQLSKATQFDFYEFGKGRIAHAVFSAKTGLCQDFKSKRGVALKMATNYYTDASYKGYYVSVIHAIIRHNGQHTDFAYTPAFSIADTKALAMTQALEKQDGERVAQMNLKEKVTLLTNIVCQ.

The first 15 residues, 1–15, serve as a signal peptide directing secretion; it reads MKQKYLFIASMALAG. C16 is lipidated: N-palmitoyl cysteine. A lipid anchor (S-diacylglycerol cysteine) is attached at C16.

To P.multocida PM0015.

The protein localises to the cell membrane. This is an uncharacterized protein from Pasteurella multocida (strain Pm70).